Here is a 427-residue protein sequence, read N- to C-terminus: MALSGNCSRYYPRDQGAAVPNSFPEVIELNVGGQVYFTRHSTLISIPHSLLWKMFSPKRDTANDLAKDSKGRFFIDRDGFLFRYILDYLRDRQVVLPDHFPERGRLKREAEYFQLPDLVKLLAPEDVKQSPDEFCHSDFEDASQGSDTRICPPSSLLPHDRKWGFITVGYRGSCTLGREGQADAKFRRVPRILVCGRISLAKEVFGETLNESRDPDRAPERYTSRFYLKFKHLERAFDMLSECGFHMVACNSSVTASFVNQYTEDKIWSSYTEYVFYREPSRWSSSHCDCCCKNGKGDKGESGTSCNDLSTSSCDSQSEASSPQETVICGPVTRQSNIQTLDRPIKKGPVQLIQQSEMRRKSDLLRTLTSGSRESNISSKKKAAKEKLSIEEELEKCIQDFLKIKIPDRFPERKHPWQSELLRKYHL.

The 74-residue stretch at 25–98 (EVIELNVGGQ…LRDRQVVLPD (74 aa)) folds into the BTB domain. Phosphotyrosine is present on Tyr-112. Residues Ser-130, Ser-137, Ser-143, and Ser-146 each carry the phosphoserine modification.

In terms of assembly, homopentamer; forms an open pentamer. In contrast to other BTB domain-containing proteins, does not interact with CUL3. Interacts as a tetramer with GABBR1 and GABBR2. As to expression, expressed in the brain, mainly in the hippocampus.

Its subcellular location is the presynaptic cell membrane. It is found in the postsynaptic cell membrane. Functionally, auxiliary subunit of GABA-B receptors that determine the pharmacology and kinetics of the receptor response. Increases agonist potency and markedly alter the G-protein signaling of the receptors by accelerating onset and promoting desensitization. This chain is BTB/POZ domain-containing protein KCTD16 (Kctd16), found in Mus musculus (Mouse).